We begin with the raw amino-acid sequence, 720 residues long: Fatty acid CoA ligase Acsl3 (720 aa).

The chain crosses the membrane as a helical; Signal-anchor for type III membrane protein span at residues 21-41; it reads ILLYFIHFLISLYTILTYIPF. The Cytoplasmic segment spans residues 42–720; sequence YFFSESRQEK…ADIERMYGRK (679 aa). Ser-683 bears the Phosphoserine mark.

Belongs to the ATP-dependent AMP-binding enzyme family. Mg(2+) serves as cofactor.

It localises to the mitochondrion outer membrane. The protein localises to the peroxisome membrane. It is found in the microsome membrane. Its subcellular location is the endoplasmic reticulum membrane. The catalysed reaction is a long-chain fatty acid + ATP + CoA = a long-chain fatty acyl-CoA + AMP + diphosphate. The enzyme catalyses (5Z,8Z,11Z,14Z)-eicosatetraenoate + ATP + CoA = (5Z,8Z,11Z,14Z)-eicosatetraenoyl-CoA + AMP + diphosphate. It carries out the reaction (E)-hexadec-2-enoate + ATP + CoA = (2E)-hexadecenoyl-CoA + AMP + diphosphate. It catalyses the reaction 15-hydroxy-(5Z,8Z,11Z,13E)-eicosatetraenoate + ATP + CoA = 15-hydroxy-(5Z,8Z,11Z,13E)-eicosatetraenoyl-CoA + AMP + diphosphate. The catalysed reaction is 12-hydroxy-(5Z,8Z,10E,14Z)-eicosatetraenoate + ATP + CoA = 12-hydroxy-(5Z,8Z,10E,14Z)-eicosatetraenoyl-CoA + AMP + diphosphate. The enzyme catalyses 5-hydroxy-(6E,8Z,11Z,14Z)-eicosatetraenoate + ATP + CoA = 5-hydroxy-(6E,8Z,11Z,14Z)-eicosatetraenoyl-CoA + AMP + diphosphate. It carries out the reaction 14,15-epoxy-(5Z,8Z,11Z)-eicosatrienoate + ATP + CoA = 14,15-epoxy-(5Z,8Z,11Z)-eicosatrienoyl-CoA + AMP + diphosphate. It catalyses the reaction 11,12-epoxy-(5Z,8Z,14Z)-eicosatrienoate + ATP + CoA = 11,12-epoxy-(5Z,8Z,14Z)-eicosatrienoyl-CoA + AMP + diphosphate. The catalysed reaction is a medium-chain fatty acid + ATP + CoA = a medium-chain fatty acyl-CoA + AMP + diphosphate. The enzyme catalyses hexadecanoate + ATP + CoA = hexadecanoyl-CoA + AMP + diphosphate. It carries out the reaction tetradecanoate + ATP + CoA = tetradecanoyl-CoA + AMP + diphosphate. It catalyses the reaction dodecanoate + ATP + CoA = dodecanoyl-CoA + AMP + diphosphate. The catalysed reaction is octadecanoate + ATP + CoA = octadecanoyl-CoA + AMP + diphosphate. The enzyme catalyses eicosanoate + ATP + CoA = eicosanoyl-CoA + AMP + diphosphate. It carries out the reaction (9Z)-octadecenoate + ATP + CoA = (9Z)-octadecenoyl-CoA + AMP + diphosphate. It catalyses the reaction (9Z)-hexadecenoate + ATP + CoA = (9Z)-hexadecenoyl-CoA + AMP + diphosphate. The catalysed reaction is (9Z,12Z)-octadecadienoate + ATP + CoA = (9Z,12Z)-octadecadienoyl-CoA + AMP + diphosphate. The enzyme catalyses (9Z,12Z,15Z)-octadecatrienoate + ATP + CoA = (9Z,12Z,15Z)-octadecatrienoyl-CoA + AMP + diphosphate. It carries out the reaction (4Z,7Z,10Z,13Z,16Z,19Z)-docosahexaenoate + ATP + CoA = (4Z,7Z,10Z,13Z,16Z,19Z)-docosahexaenoyl-CoA + AMP + diphosphate. It catalyses the reaction (5Z,8Z,11Z,14Z,17Z)-eicosapentaenoate + ATP + CoA = (5Z,8Z,11Z,14Z,17Z)-eicosapentaenoyl-CoA + AMP + diphosphate. The catalysed reaction is a fatty acid + ATP + CoA = a fatty acyl-CoA + AMP + diphosphate. In terms of biological role, acyl-CoA synthetases (ACSL) activates long-chain fatty acids for both synthesis of cellular lipids, and degradation via beta-oxidation. Required for the incorporation of fatty acids into phosphatidylcholine, the major phospholipid located on the surface of VLDL (very low density lipoproteins). Has mainly an anabolic role in energy metabolism. Mediates hepatic lipogenesis. Preferentially uses myristate, laurate, arachidonate and eicosapentaenoate as substrates. Both isoforms exhibit the same level of activity. In Homo sapiens (Human), this protein is Fatty acid CoA ligase Acsl3.